We begin with the raw amino-acid sequence, 110 residues long: Putative protein RIG (110 aa).

In terms of tissue distribution, expressed predominantly in brain and weakly in heart and lung. Expression is reduced or undetectable in cultured glioma cells, primary glioblastoma cells and malignant glioblastoma tumors.

May serve as a molecular marker for or play a role in the malignant progression of glioblastomas. This chain is Putative protein RIG (RIG), found in Homo sapiens (Human).